Here is a 160-residue protein sequence, read N- to C-terminus: Large ribosomal subunit protein uL22c (160 aa).

Belongs to the universal ribosomal protein uL22 family. Part of the 50S ribosomal subunit.

It is found in the plastid. Its subcellular location is the chloroplast. Functionally, this protein binds specifically to 23S rRNA. Its function is as follows. The globular domain of the protein is located near the polypeptide exit tunnel on the outside of the subunit, while an extended beta-hairpin is found that lines the wall of the exit tunnel in the center of the 70S ribosome. The sequence is that of Large ribosomal subunit protein uL22c (rpl22) from Lepidium virginicum (Virginia pepperweed).